Reading from the N-terminus, the 157-residue chain is Small ribosomal subunit protein uS7 (157 aa).

It belongs to the universal ribosomal protein uS7 family. As to quaternary structure, part of the 30S ribosomal subunit. Contacts proteins S9 and S11.

One of the primary rRNA binding proteins, it binds directly to 16S rRNA where it nucleates assembly of the head domain of the 30S subunit. Is located at the subunit interface close to the decoding center, probably blocks exit of the E-site tRNA. This is Small ribosomal subunit protein uS7 from Verminephrobacter eiseniae (strain EF01-2).